The chain runs to 144 residues: D-aminoacyl-tRNA deacylase (144 aa).

Positions 136–137 (GP) match the Gly-cisPro motif, important for rejection of L-amino acids motif.

It belongs to the DTD family. Homodimer.

It is found in the cytoplasm. The catalysed reaction is glycyl-tRNA(Ala) + H2O = tRNA(Ala) + glycine + H(+). It catalyses the reaction a D-aminoacyl-tRNA + H2O = a tRNA + a D-alpha-amino acid + H(+). In terms of biological role, an aminoacyl-tRNA editing enzyme that deacylates mischarged D-aminoacyl-tRNAs. Also deacylates mischarged glycyl-tRNA(Ala), protecting cells against glycine mischarging by AlaRS. Acts via tRNA-based rather than protein-based catalysis; rejects L-amino acids rather than detecting D-amino acids in the active site. By recycling D-aminoacyl-tRNA to D-amino acids and free tRNA molecules, this enzyme counteracts the toxicity associated with the formation of D-aminoacyl-tRNA entities in vivo and helps enforce protein L-homochirality. The polypeptide is D-aminoacyl-tRNA deacylase (Haemophilus influenzae (strain 86-028NP)).